The sequence spans 378 residues: UDP-4-amino-4-deoxy-L-arabinose--oxoglutarate aminotransferase (378 aa).

N6-(pyridoxal phosphate)lysine is present on Lys182.

The protein belongs to the DegT/DnrJ/EryC1 family. ArnB subfamily. As to quaternary structure, homodimer. Pyridoxal 5'-phosphate is required as a cofactor.

The enzyme catalyses UDP-4-amino-4-deoxy-beta-L-arabinose + 2-oxoglutarate = UDP-beta-L-threo-pentopyranos-4-ulose + L-glutamate. It functions in the pathway nucleotide-sugar biosynthesis; UDP-4-deoxy-4-formamido-beta-L-arabinose biosynthesis; UDP-4-deoxy-4-formamido-beta-L-arabinose from UDP-alpha-D-glucuronate: step 2/3. It participates in bacterial outer membrane biogenesis; lipopolysaccharide biosynthesis. In terms of biological role, catalyzes the conversion of UDP-4-keto-arabinose (UDP-Ara4O) to UDP-4-amino-4-deoxy-L-arabinose (UDP-L-Ara4N). The modified arabinose is attached to lipid A and is required for resistance to polymyxin and cationic antimicrobial peptides. This Aeromonas hydrophila subsp. hydrophila (strain ATCC 7966 / DSM 30187 / BCRC 13018 / CCUG 14551 / JCM 1027 / KCTC 2358 / NCIMB 9240 / NCTC 8049) protein is UDP-4-amino-4-deoxy-L-arabinose--oxoglutarate aminotransferase.